The primary structure comprises 34 residues: Photosystem I reaction center subunit XII (34 aa).

The helical transmembrane segment at 10-32 (VFVALVVAAHAAVLALRLSISLY) threads the bilayer.

This sequence belongs to the PsaM family.

The protein resides in the cellular thylakoid membrane. This chain is Photosystem I reaction center subunit XII, found in Parasynechococcus marenigrum (strain WH8102).